Here is a 206-residue protein sequence, read N- to C-terminus: Tetrathionate response regulatory protein TtrR (206 aa).

One can recognise a Response regulatory domain in the interval 3-117 (TIHLLDDDTA…PLQAALERAL (115 aa)). 4-aspartylphosphate is present on D52. Residues 134–194 (QQLTPKEREL…ELIRRFEKMA (61 aa)) form the HTH luxR-type domain. The segment at residues 153 to 172 (NREIAEAMNIAVRTVEVHRA) is a DNA-binding region (H-T-H motif).

Phosphorylated by TtrS.

The protein resides in the cytoplasm. Member of the two-component regulatory system TtrR/TtrS, which is required for synthesis of tetrathionate reductase. Positively regulates transcription of the ttrBCA operon. During mice infection, the ability to use tetrathionate as an electron acceptor is a growth advantage for S.typhimurium over the competing microbiota in the lumen of the inflamed gut. This chain is Tetrathionate response regulatory protein TtrR (ttrR), found in Salmonella typhimurium (strain LT2 / SGSC1412 / ATCC 700720).